A 476-amino-acid chain; its full sequence is Phosphomethylpyrimidine synthase (476 aa).

The disordered stretch occupies residues 1-27; the sequence is MSTQLQHARDGTVTDAMRRVADREGRD. Basic and acidic residues predominate over residues 7-27; it reads HARDGTVTDAMRRVADREGRD. Residues N67, M96, Y125, H160, 180 to 182, 221 to 224, and E260 contribute to the substrate site; these read SRG and DGLR. H264 contributes to the Zn(2+) binding site. Position 287 (Y287) interacts with substrate. Residue H328 coordinates Zn(2+). [4Fe-4S] cluster is bound by residues C408, C411, and C416. Residues 425–476 are disordered; the sequence is RDAGDDADDMTELTTETDLSESAAAEVNRPPTGTHDAPAAEQAPSPGDDDDD. The span at 436 to 447 shows a compositional bias: low complexity; that stretch reads ELTTETDLSESA.

It belongs to the ThiC family. [4Fe-4S] cluster serves as cofactor.

The enzyme catalyses 5-amino-1-(5-phospho-beta-D-ribosyl)imidazole + S-adenosyl-L-methionine = 4-amino-2-methyl-5-(phosphooxymethyl)pyrimidine + CO + 5'-deoxyadenosine + formate + L-methionine + 3 H(+). Its pathway is cofactor biosynthesis; thiamine diphosphate biosynthesis. Catalyzes the synthesis of the hydroxymethylpyrimidine phosphate (HMP-P) moiety of thiamine from aminoimidazole ribotide (AIR) in a radical S-adenosyl-L-methionine (SAM)-dependent reaction. The sequence is that of Phosphomethylpyrimidine synthase from Halobacterium salinarum (strain ATCC 29341 / DSM 671 / R1).